Here is a 295-residue protein sequence, read N- to C-terminus: Ribosomal protein L11 methyltransferase (295 aa).

Positions 138, 161, 183, and 230 each coordinate S-adenosyl-L-methionine.

This sequence belongs to the methyltransferase superfamily. PrmA family.

Its subcellular location is the cytoplasm. The enzyme catalyses L-lysyl-[protein] + 3 S-adenosyl-L-methionine = N(6),N(6),N(6)-trimethyl-L-lysyl-[protein] + 3 S-adenosyl-L-homocysteine + 3 H(+). Functionally, methylates ribosomal protein L11. The chain is Ribosomal protein L11 methyltransferase from Bradyrhizobium diazoefficiens (strain JCM 10833 / BCRC 13528 / IAM 13628 / NBRC 14792 / USDA 110).